Consider the following 480-residue polypeptide: UDP-N-acetylmuramate--L-alanine ligase (480 aa).

126 to 132 (GTHGKTT) provides a ligand contact to ATP.

Belongs to the MurCDEF family.

Its subcellular location is the cytoplasm. It catalyses the reaction UDP-N-acetyl-alpha-D-muramate + L-alanine + ATP = UDP-N-acetyl-alpha-D-muramoyl-L-alanine + ADP + phosphate + H(+). Its pathway is cell wall biogenesis; peptidoglycan biosynthesis. In terms of biological role, cell wall formation. In Blochmanniella pennsylvanica (strain BPEN), this protein is UDP-N-acetylmuramate--L-alanine ligase.